Here is a 147-residue protein sequence, read N- to C-terminus: MTIWVDADACPKVIREVLCRAAQRTGVELVFVANQLLTVPKAPNIRALQVPKGFDVADNEIARRIQPTDLLITGDIPLASEALAKGAQALNWRGDAFSKETIAAQLTMRDFMDTLRASGVQTEGPPPLSQADRQAFARQLDIWLARR.

Belongs to the UPF0178 family.

This is UPF0178 protein CV_1768 from Chromobacterium violaceum (strain ATCC 12472 / DSM 30191 / JCM 1249 / CCUG 213 / NBRC 12614 / NCIMB 9131 / NCTC 9757 / MK).